The primary structure comprises 320 residues: Malate dehydrogenase (320 aa).

Residues 10–15 (GSGMIG) and Asp34 contribute to the NAD(+) site. 2 residues coordinate substrate: Arg83 and Arg89. Residues Asn96 and 119–121 (ITN) each bind NAD(+). Residues Asn121 and Arg152 each coordinate substrate. His176 (proton acceptor) is an active-site residue.

It belongs to the LDH/MDH superfamily. MDH type 3 family.

The enzyme catalyses (S)-malate + NAD(+) = oxaloacetate + NADH + H(+). Catalyzes the reversible oxidation of malate to oxaloacetate. The protein is Malate dehydrogenase of Brucella canis (strain ATCC 23365 / NCTC 10854 / RM-666).